The sequence spans 807 residues: Glycerol-3-phosphate acyltransferase (807 aa).

The short motif at 305-310 (CHRSHM) is the HXXXXD motif element.

The protein belongs to the GPAT/DAPAT family.

It localises to the cell inner membrane. It catalyses the reaction sn-glycerol 3-phosphate + an acyl-CoA = a 1-acyl-sn-glycero-3-phosphate + CoA. It functions in the pathway phospholipid metabolism; CDP-diacylglycerol biosynthesis; CDP-diacylglycerol from sn-glycerol 3-phosphate: step 1/3. The polypeptide is Glycerol-3-phosphate acyltransferase (Klebsiella pneumoniae (strain 342)).